The chain runs to 347 residues: 4-hydroxy-2-oxovalerate aldolase (347 aa).

The 251-residue stretch at isoleucine 2–methionine 252 folds into the Pyruvate carboxyltransferase domain. Arginine 10–aspartate 11 contributes to the substrate binding site. Aspartate 11 contacts Mn(2+). The active-site Proton acceptor is histidine 14. 2 residues coordinate substrate: serine 164 and histidine 191. Mn(2+) is bound by residues histidine 191 and histidine 193.

This sequence belongs to the 4-hydroxy-2-oxovalerate aldolase family.

The catalysed reaction is (S)-4-hydroxy-2-oxopentanoate = acetaldehyde + pyruvate. The protein is 4-hydroxy-2-oxovalerate aldolase (mhpE) of Burkholderia thailandensis (strain ATCC 700388 / DSM 13276 / CCUG 48851 / CIP 106301 / E264).